A 556-amino-acid chain; its full sequence is Potassium-transporting ATPase potassium-binding subunit (556 aa).

A run of 12 helical transmembrane segments spans residues 3–23 (AHGV…TPIL), 57–77 (AAYA…LYAL), 129–149 (GLTV…VALM), 172–192 (LGLL…QGVP), 247–267 (LVNL…TNTF), 278–298 (WALL…AWWA), 319–339 (LGVA…CGAV), 346–366 (LLPL…VVVG), 371–391 (GLYG…LMVG), 408–428 (LAVI…GLAI), 486–506 (FVVM…MAVP), and 516–536 (GWLF…LTYF).

This sequence belongs to the KdpA family. As to quaternary structure, the system is composed of three essential subunits: KdpA, KdpB and KdpC.

Its subcellular location is the cell inner membrane. Its function is as follows. Part of the high-affinity ATP-driven potassium transport (or Kdp) system, which catalyzes the hydrolysis of ATP coupled with the electrogenic transport of potassium into the cytoplasm. This subunit binds the periplasmic potassium ions and delivers the ions to the membrane domain of KdpB through an intramembrane tunnel. The sequence is that of Potassium-transporting ATPase potassium-binding subunit from Paramagnetospirillum magneticum (strain ATCC 700264 / AMB-1) (Magnetospirillum magneticum).